Here is a 501-residue protein sequence, read N- to C-terminus: Xylulose kinase (501 aa).

81 to 82 (MH) contributes to the substrate binding site. The Proton acceptor role is filled by aspartate 239.

This sequence belongs to the FGGY kinase family.

It catalyses the reaction D-xylulose + ATP = D-xylulose 5-phosphate + ADP + H(+). Its function is as follows. Catalyzes the phosphorylation of D-xylulose to D-xylulose 5-phosphate. This is Xylulose kinase from Lactococcus lactis subsp. lactis (strain IL1403) (Streptococcus lactis).